Here is an 860-residue protein sequence, read N- to C-terminus: Leucine--tRNA ligase (860 aa).

A 'HIGH' region motif is present at residues 42 to 52; the sequence is PYPSGRLHMGH. Positions 619–623 match the 'KMSKS' region motif; it reads KMSKS. Lysine 622 contributes to the ATP binding site.

This sequence belongs to the class-I aminoacyl-tRNA synthetase family.

It localises to the cytoplasm. The catalysed reaction is tRNA(Leu) + L-leucine + ATP = L-leucyl-tRNA(Leu) + AMP + diphosphate. This is Leucine--tRNA ligase from Escherichia coli O45:K1 (strain S88 / ExPEC).